Reading from the N-terminus, the 276-residue chain is Urease accessory protein UreD (276 aa).

This sequence belongs to the UreD family. As to quaternary structure, ureD, UreF and UreG form a complex that acts as a GTP-hydrolysis-dependent molecular chaperone, activating the urease apoprotein by helping to assemble the nickel containing metallocenter of UreC. The UreE protein probably delivers the nickel.

It is found in the cytoplasm. In terms of biological role, required for maturation of urease via the functional incorporation of the urease nickel metallocenter. The polypeptide is Urease accessory protein UreD (Polaromonas naphthalenivorans (strain CJ2)).